The chain runs to 128 residues: Ribonuclease P protein component (128 aa).

It belongs to the RnpA family. As to quaternary structure, consists of a catalytic RNA component (M1 or rnpB) and a protein subunit.

The enzyme catalyses Endonucleolytic cleavage of RNA, removing 5'-extranucleotides from tRNA precursor.. Its function is as follows. RNaseP catalyzes the removal of the 5'-leader sequence from pre-tRNA to produce the mature 5'-terminus. It can also cleave other RNA substrates such as 4.5S RNA. The protein component plays an auxiliary but essential role in vivo by binding to the 5'-leader sequence and broadening the substrate specificity of the ribozyme. The polypeptide is Ribonuclease P protein component (Chromohalobacter salexigens (strain ATCC BAA-138 / DSM 3043 / CIP 106854 / NCIMB 13768 / 1H11)).